A 415-amino-acid chain; its full sequence is M protein, serotype 6 (415 aa).

The N-terminal stretch at 1–42 is a signal peptide; it reads MAKNNTNRHYSLRKLKKGTASVAVALSVIGAGLVVNTNEVSA. Coiled coils occupy residues 54–133 and 170–340; these read DKAR…LKKI and EASR…GKAS. 3 repeat units span residues 69–75, 76–82, and 83–89. Residues 69–103 form a 5 X 7 AA approximate tandem repeats of [KMNR]-L-[TQ]-[TDA]-[ENQ]-N-[NDK] region; the sequence is MLQANNDKLTTENKNLTDQNKELKAEENRLTTENK. Residues 75-86 are compositionally biased toward polar residues; sequence DKLTTENKNLTD. Disordered stretches follow at residues 75–125, 157–189, 202–231, and 247–277; these read DKLT…ESKE, QELA…AKKQ, DKVK…AKKQ, and KEEK…VEKA. Basic and acidic residues-rich tracts occupy residues 87–100, 108–125, and 158–189; these read QNKE…RLTT, KLSE…ESKE, and ELAK…AKKQ. Residues 90-96 form a 4; approximate repeat; it reads ELKAEEN. Repeat 5 spans residues 97-103; the sequence is RLTTENK. C repeat units lie at residues 160–194, 202–236, and 244–278; these read AKKD…EKDL, DKVK…EKDL, and DKVK…EKAL. Residues 211–279 are binding to CD46; sequence SDASRKGLRR…AKKQVEKALE (69 aa). The tract at residues 211 to 279 is two directly repeated 27 amino acid blocks separated by 15 amino acids; that stretch reads SDASRKGLRR…AKKQVEKALE (69 aa). Residues 260–277 are compositionally biased toward basic and acidic residues; it reads LRRDLDASREAKKQVEKA. A hydrophilic region spans residues 280 to 343; the sequence is EANSKLAALE…LRAGKASDSQ (64 aa). D repeat units follow at residues 311–316, 317–322, 325–330, and 332–337; these read AKLEAE, AKALKE, AKQAEE, and AKLRAG. The tract at residues 332 to 387 is disordered; that stretch reads AKLRAGKASDSQTPDAKPGNKVVPGKGQAPQAGTKPNQNKAPMKETKRQLPSTGET. Residues 381–385 carry the LPXTG sorting signal motif; it reads LPSTG. Thr-384 is modified (pentaglycyl murein peptidoglycan amidated threonine). Residues 385–415 constitute a propeptide, removed by sortase; sequence GETANPFFTAAALTVMATAGVAAVVKRKEEN.

Belongs to the M protein family.

Its subcellular location is the secreted. The protein resides in the cell wall. Functionally, mediates the attachment of S.pyogenes to skin epithelial cells through the binding of the human membrane cofactor protein CD46. Also binds to the factor H and factor H-like protein 1. These interactions could contribute to the fact that the M6 protein protects the bacterium from the phagocytosis by regulating the complement activation on the bacterial surface. This is M protein, serotype 6 (emm6) from Streptococcus pyogenes serotype M6 (strain ATCC BAA-946 / MGAS10394).